We begin with the raw amino-acid sequence, 355 residues long: 3-dehydroquinate synthase (355 aa).

NAD(+) contacts are provided by residues 71 to 76, 105 to 109, 129 to 130, Lys142, and Lys151; these read EGEASK, GVVGD, and TS. 3 residues coordinate Zn(2+): Glu184, His246, and His263.

It belongs to the sugar phosphate cyclases superfamily. Dehydroquinate synthase family. Co(2+) is required as a cofactor. Requires Zn(2+) as cofactor. NAD(+) serves as cofactor.

The protein localises to the cytoplasm. The enzyme catalyses 7-phospho-2-dehydro-3-deoxy-D-arabino-heptonate = 3-dehydroquinate + phosphate. The protein operates within metabolic intermediate biosynthesis; chorismate biosynthesis; chorismate from D-erythrose 4-phosphate and phosphoenolpyruvate: step 2/7. Its function is as follows. Catalyzes the conversion of 3-deoxy-D-arabino-heptulosonate 7-phosphate (DAHP) to dehydroquinate (DHQ). The sequence is that of 3-dehydroquinate synthase from Streptococcus sanguinis (strain SK36).